The chain runs to 775 residues: Mitosis inducer protein kinase cdr2 (775 aa).

In terms of domain architecture, Protein kinase spans 10–262; that stretch reads WELGLSLGSG…MEQIREHPFL (253 aa). ATP is bound by residues 16 to 24 and K39; that span reads LGSGGPNSS. The Proton acceptor role is filled by D133. A phosphoserine mark is found at S309, S311, and S476. Low complexity predominate over residues 549–563; that stretch reads NNIDNNNYNQPYANA. The interval 549 to 620 is disordered; sequence NNIDNNNYNQ…TKKKLSGSPF (72 aa). Positions 584–593 are enriched in polar residues; sequence LSQSPASYDS. Residues S587 and S632 each carry the phosphoserine modification.

The protein belongs to the protein kinase superfamily. CAMK Ser/Thr protein kinase family. NIM1 subfamily. In terms of assembly, interacts with blt1 and mid1. Autophosphorylated.

It catalyses the reaction L-seryl-[protein] + ATP = O-phospho-L-seryl-[protein] + ADP + H(+). It carries out the reaction L-threonyl-[protein] + ATP = O-phospho-L-threonyl-[protein] + ADP + H(+). In terms of biological role, acts as a mitotic inducer. In G2 it negatively regulates wee1, a mitotic inhibitor. Also has a role in cytokinesis where it required for proper septum formation. This is Mitosis inducer protein kinase cdr2 (cdr2) from Schizosaccharomyces pombe (strain 972 / ATCC 24843) (Fission yeast).